The sequence spans 68 residues: Protein SlyX homolog (68 aa).

The protein belongs to the SlyX family.

In Pseudomonas syringae pv. syringae (strain B728a), this protein is Protein SlyX homolog.